We begin with the raw amino-acid sequence, 184 residues long: Large ribosomal subunit protein bL9 (184 aa).

A disordered region spans residues 160–184 (LQNQKSEQQEAEQDANKEATDGDDS). The span at 173–184 (DANKEATDGDDS) shows a compositional bias: basic and acidic residues.

This sequence belongs to the bacterial ribosomal protein bL9 family.

Functionally, binds to the 23S rRNA. This chain is Large ribosomal subunit protein bL9, found in Wolbachia pipientis wMel.